Here is a 306-residue protein sequence, read N- to C-terminus: Agmatinase (306 aa).

H126, D149, H151, D153, D230, and D232 together coordinate Mn(2+).

This sequence belongs to the arginase family. Agmatinase subfamily. Mn(2+) is required as a cofactor.

It catalyses the reaction agmatine + H2O = urea + putrescine. Its pathway is amine and polyamine biosynthesis; putrescine biosynthesis via agmatine pathway; putrescine from agmatine: step 1/1. Functionally, catalyzes the formation of putrescine from agmatine. This chain is Agmatinase, found in Escherichia coli O9:H4 (strain HS).